The primary structure comprises 460 residues: Angiopoietin-related protein 3 (460 aa).

Residues 1-16 (MFTIKLLLFIVPLVIS) form the signal peptide. Residues 17–165 (SRIDQDNSSF…PEHPEVTSLK (149 aa)) are sufficient to inhibit LPL lipase activity. A sufficient to inhibit LIPG/EL phospholipase activity region spans residues 17 to 207 (SRIDQDNSSF…EIENQLRRTS (191 aa)). A required for inhibition of LPL lipase activity region spans residues 32–56 (EPKSRFAMLDDVKILANGLLQLGHG). The stretch at 85–210 (LSLQTSEIKE…NQLRRTSIQE (126 aa)) forms a coiled coil. N-linked (GlcNAc...) asparagine glycosylation is present at Asn115. O-linked (GalNAc) threonine glycosylation is present at Thr226. A Fibrinogen C-terminal domain is found at 237–455 (VKHDGIPAEC…STKMLIHPTD (219 aa)). Residues Cys246 and Cys274 are joined by a disulfide bond. Residues Asn296 and Asn357 are each glycosylated (N-linked (GlcNAc...) asparagine). The cysteines at positions 394 and 408 are disulfide-linked.

As to quaternary structure, interacts with ANGPTL8. Interacts with ITGB3. In terms of processing, O-glycosylated at Thr-226 by GALNT2; blocks processing and activation by proprotein convertases. In part proteolytically cleaved by proprotein convertases; proposed to be involved in activation. Expressed principally in liver. Weakly expressed in kidney. Binds to adipocytes. Increased expression and colocalization with activated ITGB3 in glomeruli of patients with nephrotic syndrome showing effaced podocyte foot processes (at protein level).

It localises to the secreted. The protein resides in the cell projection. The protein localises to the lamellipodium. Its function is as follows. Acts in part as a hepatokine that is involved in regulation of lipid and glucose metabolism. Proposed to play a role in the trafficking of energy substrates to either storage or oxidative tissues in response to food intake. Has a stimulatory effect on plasma triglycerides (TG), which is achieved by suppressing plasma TG clearance via inhibition of LPL activity. The inhibition of LPL activity appears to be an indirect mechanism involving recruitment of proprotein convertases PCSK6 and FURIN to LPL leading to cleavage and dissociation of LPL from the cell surface; the function does not require ANGPTL3 proteolytic cleavage but seems to be mediated by the N-terminal domain, and is not inhibited by GPIHBP1. Can inhibit endothelial lipase, causing increased plasma levels of high density lipoprotein (HDL) cholesterol and phospholipids. Can bind to adipocytes to activate lipolysis, releasing free fatty acids and glycerol. Suppresses LPL specifically in oxidative tissues which is required to route very low density lipoprotein (VLDL)-TG to white adipose tissue (WAT) for storage in response to food; the function may involve cooperation with circulating, liver-derived ANGPTL8 and ANGPTL4 expression in WAT. Contributes to lower plasma levels of low density lipoprotein (LDL)-cholesterol by a mechanism that is independent of the canonical pathway implicating APOE and LDLR. May stimulate hypothalamic LPL activity. In vitro inhibits LPL activity; not effective on GPIHBP1-stabilized LPL. In terms of biological role, involved in angiogenesis. Binds to endothelial cells via integrin alpha-V/beta-3 (ITGAV:ITGB3), activates FAK, MAPK and Akt signaling pathways and induces cell adhesion and cell migration. Secreted from podocytes, may modulate properties of glomerular endothelial cells involving integrin alpha-V/beta-3 and Akt signaling. May increase the motility of podocytes. May induce actin filament rearrangements in podocytes implicating integrin alpha-V/beta-3 and Rac1 activation. Binds to hematopoietic stem cells (HSC) and is involved in the regulation of HSC activity probably implicating down-regulation of IKZF1/IKAROS. This Homo sapiens (Human) protein is Angiopoietin-related protein 3 (ANGPTL3).